An 818-amino-acid chain; its full sequence is Serine/threonine-protein phosphatase 4 regulatory subunit 3 (818 aa).

One can recognise a WH1 domain in the interval 1–100 (MTDTRRRVKV…DEIWEKICQV (100 aa)). Residues 718 to 818 (LAKSSFSGRQ…PPSKKSRLSS (101 aa)) form a disordered region. Polar residues predominate over residues 721-730 (SSFSGRQNPS). A compositionally biased stretch (low complexity) spans 736–756 (SGSTKTSLSSPPPSASLSPGS). Residues 788-804 (YPDDDEEEEDDDDEESK) are compositionally biased toward acidic residues.

Belongs to the SMEK family. In terms of assembly, serine/threonine-protein phosphatase 4 (PP4) occurs in different assemblies of the catalytic and one or more regulatory subunits.

In terms of biological role, regulatory subunit of serine/threonine-protein phosphatase 4. This is Serine/threonine-protein phosphatase 4 regulatory subunit 3 (smek1) from Tetraodon nigroviridis (Spotted green pufferfish).